Consider the following 131-residue polypeptide: Large ribosomal subunit protein eL32 (131 aa).

It belongs to the eukaryotic ribosomal protein eL32 family.

The polypeptide is Large ribosomal subunit protein eL32 (RPL32) (Candida glabrata (strain ATCC 2001 / BCRC 20586 / JCM 3761 / NBRC 0622 / NRRL Y-65 / CBS 138) (Yeast)).